The sequence spans 179 residues: Photosystem I assembly protein Ycf3 (179 aa).

TPR repeat units lie at residues 29–62, 66–99, and 126–159; these read AFSYYRAGMSAQSEGKYAEALENYYEALQLEEDP, SYTLYNIGLIYGNNGNYSQALEYYHQALELNSNL, and NLEIRNDEYLELAKEFFDKAAEYWRQALKLAPDN.

This sequence belongs to the Ycf3 family.

It is found in the plastid. The protein localises to the chloroplast thylakoid membrane. Its function is as follows. Essential for the assembly of the photosystem I (PSI) complex. May act as a chaperone-like factor to guide the assembly of the PSI subunits. This chain is Photosystem I assembly protein Ycf3, found in Trieres chinensis (Marine centric diatom).